The chain runs to 427 residues: Enolase (427 aa).

Q163 contributes to the (2R)-2-phosphoglycerate binding site. E205 serves as the catalytic Proton donor. 3 residues coordinate Mg(2+): D242, E288, and D315. (2R)-2-phosphoglycerate is bound by residues K340, R369, S370, and K391. The Proton acceptor role is filled by K340.

It belongs to the enolase family. It depends on Mg(2+) as a cofactor.

Its subcellular location is the cytoplasm. It localises to the secreted. It is found in the cell surface. The enzyme catalyses (2R)-2-phosphoglycerate = phosphoenolpyruvate + H2O. The protein operates within carbohydrate degradation; glycolysis; pyruvate from D-glyceraldehyde 3-phosphate: step 4/5. Catalyzes the reversible conversion of 2-phosphoglycerate (2-PG) into phosphoenolpyruvate (PEP). It is essential for the degradation of carbohydrates via glycolysis. The protein is Enolase of Amoebophilus asiaticus (strain 5a2).